We begin with the raw amino-acid sequence, 196 residues long: MSSYIPYVVEKTSRGERSYDIYSRLLKDRIIMLSGEINDDLAASIVAQLLFLEAEDPQKDIYLYINSPGGVVTSGFSIYDTMNYIKADVSTICIGQAASMGAFLLSCGAPGKRFALPNSRIMIHQPLGGARGQATDIEIQAKEILRLKAILNDILAKNTKQKLSKIEKDTDRDFFMSAIEAKEYGLIDKVLEKSFK.

The active-site Nucleophile is the Ser-99. The active site involves His-124.

Belongs to the peptidase S14 family. As to quaternary structure, fourteen ClpP subunits assemble into 2 heptameric rings which stack back to back to give a disk-like structure with a central cavity, resembling the structure of eukaryotic proteasomes.

The protein localises to the cytoplasm. It carries out the reaction Hydrolysis of proteins to small peptides in the presence of ATP and magnesium. alpha-casein is the usual test substrate. In the absence of ATP, only oligopeptides shorter than five residues are hydrolyzed (such as succinyl-Leu-Tyr-|-NHMec, and Leu-Tyr-Leu-|-Tyr-Trp, in which cleavage of the -Tyr-|-Leu- and -Tyr-|-Trp bonds also occurs).. Its function is as follows. Cleaves peptides in various proteins in a process that requires ATP hydrolysis. Has a chymotrypsin-like activity. Plays a major role in the degradation of misfolded proteins. This chain is ATP-dependent Clp protease proteolytic subunit, found in Campylobacter lari (strain RM2100 / D67 / ATCC BAA-1060).